Reading from the N-terminus, the 131-residue chain is Small ribosomal subunit protein uS11 (131 aa).

Belongs to the universal ribosomal protein uS11 family. As to quaternary structure, part of the 30S ribosomal subunit. Interacts with proteins S7 and S18. Binds to IF-3.

In terms of biological role, located on the platform of the 30S subunit, it bridges several disparate RNA helices of the 16S rRNA. Forms part of the Shine-Dalgarno cleft in the 70S ribosome. The sequence is that of Small ribosomal subunit protein uS11 from Chromobacterium violaceum (strain ATCC 12472 / DSM 30191 / JCM 1249 / CCUG 213 / NBRC 12614 / NCIMB 9131 / NCTC 9757 / MK).